Reading from the N-terminus, the 339-residue chain is Anthranilate phosphoribosyltransferase (339 aa).

5-phospho-alpha-D-ribose 1-diphosphate-binding positions include G80, 83-84 (GD), T88, 90-93 (NIST), 108-116 (KHGNRSVSS), and S120. G80 is a binding site for anthranilate. S92 lines the Mg(2+) pocket. N111 is a binding site for anthranilate. R166 contributes to the anthranilate binding site. Mg(2+)-binding residues include D225 and E226.

This sequence belongs to the anthranilate phosphoribosyltransferase family. In terms of assembly, homodimer. Mg(2+) serves as cofactor.

The catalysed reaction is N-(5-phospho-beta-D-ribosyl)anthranilate + diphosphate = 5-phospho-alpha-D-ribose 1-diphosphate + anthranilate. The protein operates within amino-acid biosynthesis; L-tryptophan biosynthesis; L-tryptophan from chorismate: step 2/5. In terms of biological role, catalyzes the transfer of the phosphoribosyl group of 5-phosphorylribose-1-pyrophosphate (PRPP) to anthranilate to yield N-(5'-phosphoribosyl)-anthranilate (PRA). This Alkaliphilus metalliredigens (strain QYMF) protein is Anthranilate phosphoribosyltransferase.